We begin with the raw amino-acid sequence, 181 residues long: ADP-ribosylation factor 3 (181 aa).

A lipid anchor (N-myristoyl glycine) is attached at glycine 2. Residues 24–31 (GLDAAGKT), 67–71 (DVGGQ), and 126–129 (NKQD) each bind GTP.

The protein belongs to the small GTPase superfamily. Arf family. As to quaternary structure, interacts with PRKCABP. Interacts with PI4KB and NCS1/FREQ at the Golgi complex.

Its subcellular location is the golgi apparatus. The protein resides in the cytoplasm. It localises to the perinuclear region. In terms of biological role, GTP-binding protein that functions as an allosteric activator of the cholera toxin catalytic subunit, an ADP-ribosyltransferase. Involved in protein trafficking; may modulate vesicle budding and uncoating within the Golgi apparatus. The chain is ADP-ribosylation factor 3 (ARF3) from Bos taurus (Bovine).